A 360-amino-acid chain; its full sequence is Phospho-N-acetylmuramoyl-pentapeptide-transferase (360 aa).

A run of 10 helical transmembrane segments spans residues 27-47, 70-90, 93-113, 134-154, 168-188, 205-225, 239-259, 262-282, 288-308, and 337-357; these read GALI…ISSL, GTPT…SILW, LSSV…AIGF, LALE…AGQE, LLLN…VGAG, VMVA…AIFA, LSVI…FNAP, AIFM…TVAV, IVLA…IIQV, and QVVI…LSTL.

This sequence belongs to the glycosyltransferase 4 family. MraY subfamily. The cofactor is Mg(2+).

It localises to the cell inner membrane. The catalysed reaction is UDP-N-acetyl-alpha-D-muramoyl-L-alanyl-gamma-D-glutamyl-meso-2,6-diaminopimeloyl-D-alanyl-D-alanine + di-trans,octa-cis-undecaprenyl phosphate = di-trans,octa-cis-undecaprenyl diphospho-N-acetyl-alpha-D-muramoyl-L-alanyl-D-glutamyl-meso-2,6-diaminopimeloyl-D-alanyl-D-alanine + UMP. The protein operates within cell wall biogenesis; peptidoglycan biosynthesis. Its function is as follows. Catalyzes the initial step of the lipid cycle reactions in the biosynthesis of the cell wall peptidoglycan: transfers peptidoglycan precursor phospho-MurNAc-pentapeptide from UDP-MurNAc-pentapeptide onto the lipid carrier undecaprenyl phosphate, yielding undecaprenyl-pyrophosphoryl-MurNAc-pentapeptide, known as lipid I. In Chelativorans sp. (strain BNC1), this protein is Phospho-N-acetylmuramoyl-pentapeptide-transferase.